The sequence spans 431 residues: MSWVQATLLARGLCRAWGGTCGAALTGTSISQVPRRLPRGLHCSAAAHSSEQSLVPSPPEPRQRPTKALVPFEDLFGQAPGGERDKASFLQTVQKFAEHSVRKRGHIDFIYLALRKMREYGVERDLAVYNQLLNIFPKEVFRPRNIIQRIFVHYPRQQECGIAVLEQMENHGVMPNKETEFLLIQIFGRKSYPMLKLVRLKLWFPRFMNVNPFPVPRDLPQDPVELAMFGLRHMEPDLSARVTIYQVPLPKDSTGAADPPQPHIVGIQSPDQQAALARHNPARPVFVEGPFSLWLRNKCVYYHILRADLLPPEEREVEETPEEWNLYYPMQLDLEYVRSGWDNYEFDINEVEEGPVFAMCMAGAHDQATMAKWIQGLQETNPTLAQIPVVFRLAGSTRELQTSSAGLEEPPLPEDHQEEDDNLQRQQQGQS.

The transit peptide at 1–48 directs the protein to the mitochondrion; the sequence is MSWVQATLLARGLCRAWGGTCGAALTGTSISQVPRRLPRGLHCSAAAH. Residue Lys372 forms a Glycyl lysine isopeptide (Lys-Gly) (interchain with G-Cter in ubiquitin) linkage. The disordered stretch occupies residues 400 to 431; the sequence is LQTSSAGLEEPPLPEDHQEEDDNLQRQQQGQS.

This sequence belongs to the ECSIT family. In terms of assembly, interacts with MAP3K1, SMAD4 and TRAF6. Interacts with SMAD1 only after BMP4-treatment. Part of the mitochondrial complex I assembly/MCIA complex that comprises at least the core subunits TMEM126B, NDUFAF1, ECSIT and ACAD9 and complement subunits such as COA1 and TMEM186. Interacts with NDUFAF1. Interacts with ACAD9. Interacts with TRIM59. Interacts with TMEM70 and TMEM242. Interacts (when ubiquitinated) with NF-kappa-B subunits RELA and NFKB1. Interacts with RIGI, IFIT1 and MAVS; these interactions promote RLR-mediated type I IFN induction. Interacts with SQSTM1; this interaction inhibits TLR4 signaling via functional regulation of the TRAF6-ECSIT complex. Interacts with cereblon/CRBN; this interaction inhibits the ubiquitination of ECSIT. Ubiquitinated on Lys-372; leading to translocation in the nucleus together with RELA and NFKB1 and expression of NF-kappa-B-dependent genes.

The protein localises to the cytoplasm. It is found in the nucleus. It localises to the mitochondrion. Functionally, adapter protein that plays a role in different signaling pathways including TLRs and IL-1 pathways or innate antiviral induction signaling. Plays a role in the activation of NF-kappa-B by forming a signal complex with TRAF6 and TAK1/MAP3K7 to activate TAK1/MAP3K7 leading to activation of IKKs. Once ubiquitinated, interacts with the dissociated RELA and NFKB1 proteins and translocates to the nucleus where it induces NF-kappa-B-dependent gene expression. Plays a role in innate antiviral immune response by bridging the pattern recognition receptors RIGI and MDA5/IFIT1 to the MAVS complex at the mitochondrion. Promotes proteolytic activation of MAP3K1. Involved in the BMP signaling pathway. Required for normal embryonic development. Its function is as follows. As part of the MCIA complex, involved in the assembly of the mitochondrial complex I. The polypeptide is Evolutionarily conserved signaling intermediate in Toll pathway, mitochondrial (Homo sapiens (Human)).